A 344-amino-acid polypeptide reads, in one-letter code: L-rhamnose-proton symporter (344 aa).

The next 10 membrane-spanning stretches (helical) occupy residues 4–24 (AITM…CFYA), 38–58 (WSIG…ALLL), 68–88 (FNLS…IGNI), 101–121 (MGIG…TPII), 137–157 (TLLG…AGQL), 175–195 (LLLA…MNAA), 214–234 (LPSY…FCFV), 259–279 (ILLS…YAWG), 290–310 (ISWM…GLVL), and 323–343 (VLSL…MGMA).

It belongs to the L-rhamnose transporter (TC 2.A.7.6) family.

It is found in the cell inner membrane. The enzyme catalyses L-rhamnopyranose(in) + H(+)(in) = L-rhamnopyranose(out) + H(+)(out). Uptake of L-rhamnose across the cytoplasmic membrane with the concomitant transport of protons into the cell (symport system). The sequence is that of L-rhamnose-proton symporter from Citrobacter koseri (strain ATCC BAA-895 / CDC 4225-83 / SGSC4696).